A 102-amino-acid chain; its full sequence is Small ribosomal subunit protein uS10 (102 aa).

Belongs to the universal ribosomal protein uS10 family. In terms of assembly, part of the 30S ribosomal subunit.

Functionally, involved in the binding of tRNA to the ribosomes. In Methanosphaera stadtmanae (strain ATCC 43021 / DSM 3091 / JCM 11832 / MCB-3), this protein is Small ribosomal subunit protein uS10.